The sequence spans 227 residues: PKHD-type hydroxylase CC_0027 (227 aa).

Residues 78-178 (TILSPMFNRY…RTASFFWIQS (101 aa)) enclose the Fe2OG dioxygenase domain. Residues H96, D98, and H159 each coordinate Fe cation. Position 169 (R169) interacts with 2-oxoglutarate.

Fe(2+) is required as a cofactor. L-ascorbate serves as cofactor.

The polypeptide is PKHD-type hydroxylase CC_0027 (Caulobacter vibrioides (strain ATCC 19089 / CIP 103742 / CB 15) (Caulobacter crescentus)).